The chain runs to 363 residues: Peptide chain release factor 2 (363 aa).

Gln251 carries the post-translational modification N5-methylglutamine.

Belongs to the prokaryotic/mitochondrial release factor family. Post-translationally, methylated by PrmC. Methylation increases the termination efficiency of RF2.

The protein localises to the cytoplasm. In terms of biological role, peptide chain release factor 2 directs the termination of translation in response to the peptide chain termination codons UGA and UAA. This chain is Peptide chain release factor 2, found in Helicobacter pylori (strain Shi470).